Here is a 303-residue protein sequence, read N- to C-terminus: Growth/differentiation factor 15 (303 aa).

A signal peptide spans 1–30 (MALRALHAQPTGGPQLRFLLFLLLLLLLLS). A propeptide spanning residues 31–188 (WPSQGDALAL…LRSAAGRGRR (158 aa)) is cleaved from the precursor. Asparagine 71 is a glycosylation site (N-linked (GlcNAc...) asparagine). 4 cysteine pairs are disulfide-bonded: cysteine 198-cysteine 205, cysteine 206-cysteine 269, cysteine 235-cysteine 300, and cysteine 239-cysteine 302.

This sequence belongs to the TGF-beta family. As to quaternary structure, homodimer; disulfide-linked. Interacts with GFRAL and RET; ligand of GFRAL, which mediates GDF15 internalization and cellular signaling through interaction with RET via the formation of a 2:2:2 ternary complex composed of GDF15, GFRAL and RET. In terms of tissue distribution, detected in plasma (at protein level).

The protein resides in the secreted. Hormone produced in response to various stresses to confer information about those stresses to the brain, and trigger an aversive response, characterized by nausea and/or loss of appetite. The aversive response is both required to reduce continuing exposure to those stresses at the time of exposure and to promote avoidance behavior in the future. Acts by binding to its receptor, GFRAL, activating GFRAL-expressing neurons localized in the area postrema and nucleus tractus solitarius of the brainstem. It then triggers the activation of neurons localized within the parabrachial nucleus and central amygdala, which constitutes part of the 'emergency circuit' that shapes responses to stressful conditions. The GDF15-GFRAL signal induces expression of genes involved in metabolism, such as lipid metabolism in adipose tissues. Contributes to the effect of metformin, an anti-diabetic drug, on appetite reduction and weight loss: produced in the kidney in response to metformin treatment, thereby activating the GDF15-GFRAL response, leading to reduced appetite and weight. Required for avoidance behavior in response to food allergens: induced downstream of mast cell activation to promote aversion and minimize harmful effects of exposure to noxious substances. Produced in response to anticancer drugs, such as camptothecin or cisplatin, promoting nausea and contributing to malnutrition. Overproduced in many cancers, promoting anorexia in cancer (cachexia). Responsible for the risk of nausea during pregnancy: high levels of GDF15 during pregnancy, mostly originating from embryos, are associated with increased nausea. Maternal sensitivity to nausea is probably determined by pre-pregnancy exposure to GDF15, females with naturally high level of GDF15 being less susceptible to nausea than female rats with low levels of GDF15 before pregnancy. Promotes metabolic adaptation in response to systemic inflammation caused by bacterial and viral infections in order to promote tissue tolerance and prevent tissue damage. Required for tissue tolerance in response to myocardial infarction by acting as an inhibitor of leukocyte integring activation, thereby protecting against cardiac rupture. Inhibits growth hormone signaling on hepatocytes. This Rattus norvegicus (Rat) protein is Growth/differentiation factor 15.